Here is a 762-residue protein sequence, read N- to C-terminus: FAST kinase domain-containing protein 5, mitochondrial (762 aa).

Ser-95 is subject to Phosphoserine. Lys-506 carries the N6-acetyllysine modification. Residues 695–755 (LAIQFTNKNQ…RLEKLAYLHE (61 aa)) form the RAP domain.

It belongs to the FAST kinase family. In terms of assembly, found in a complex with GRSF1, DDX28, DHX30 and FASTKD2. Associates with the 12S mitochondrial rRNA (12S mt-rRNA). Expression detected in spleen, testis, colon, heart, smooth muscle, kidney, brain, lung, liver, brown and white adipose tissue.

The protein localises to the mitochondrion matrix. The protein resides in the mitochondrion nucleoid. In terms of biological role, plays an important role in the processing of non-canonical mitochondrial mRNA precursors. The protein is FAST kinase domain-containing protein 5, mitochondrial (Fastkd5) of Mus musculus (Mouse).